Consider the following 175-residue polypeptide: Large ribosomal subunit protein eL14 (175 aa).

Positions 150-175 (KAAKMDSTEGAKRRMQKAIAARKAKK) are disordered. Residues 152 to 161 (AKMDSTEGAK) are compositionally biased toward basic and acidic residues. Residues 162 to 175 (RRMQKAIAARKAKK) are compositionally biased toward basic residues.

The protein belongs to the eukaryotic ribosomal protein eL14 family.

Its function is as follows. Component of the large ribosomal subunit. The ribosome is a large ribonucleoprotein complex responsible for the synthesis of proteins in the cell. The protein is Large ribosomal subunit protein eL14 (RPL14) of Leishmania donovani.